We begin with the raw amino-acid sequence, 242 residues long: Anthranilate phosphoribosyltransferase (242 aa).

Residues G79, 82–83 (GD), T87, 89–92 (NVST), 107–115 (KHGNRAVSS), and S119 each bind 5-phospho-alpha-D-ribose 1-diphosphate. G79 serves as a coordination point for anthranilate. S91 is a binding site for Mg(2+). N110 lines the anthranilate pocket. Residue R165 coordinates anthranilate. Residues D224 and E225 each contribute to the Mg(2+) site.

This sequence belongs to the anthranilate phosphoribosyltransferase family. As to quaternary structure, homodimer. Requires Mg(2+) as cofactor.

The catalysed reaction is N-(5-phospho-beta-D-ribosyl)anthranilate + diphosphate = 5-phospho-alpha-D-ribose 1-diphosphate + anthranilate. Its pathway is amino-acid biosynthesis; L-tryptophan biosynthesis; L-tryptophan from chorismate: step 2/5. In terms of biological role, catalyzes the transfer of the phosphoribosyl group of 5-phosphorylribose-1-pyrophosphate (PRPP) to anthranilate to yield N-(5'-phosphoribosyl)-anthranilate (PRA). In Bacillus caldotenax, this protein is Anthranilate phosphoribosyltransferase (trpD).